A 387-amino-acid chain; its full sequence is Succinate--CoA ligase [ADP-forming] subunit beta (387 aa).

Positions 9–236 constitute an ATP-grasp domain; that stretch reads KELFAKHNVP…RAATDPLELK (228 aa). ATP is bound by residues Lys-45, 52 to 54, Ser-94, and Glu-99; that span reads GRG. 2 residues coordinate Mg(2+): Asn-191 and Asp-205. Residues Asn-256 and 318-320 each bind substrate; that span reads GIT.

It belongs to the succinate/malate CoA ligase beta subunit family. As to quaternary structure, heterotetramer of two alpha and two beta subunits. Mg(2+) is required as a cofactor.

It carries out the reaction succinate + ATP + CoA = succinyl-CoA + ADP + phosphate. The catalysed reaction is GTP + succinate + CoA = succinyl-CoA + GDP + phosphate. The protein operates within carbohydrate metabolism; tricarboxylic acid cycle; succinate from succinyl-CoA (ligase route): step 1/1. Succinyl-CoA synthetase functions in the citric acid cycle (TCA), coupling the hydrolysis of succinyl-CoA to the synthesis of either ATP or GTP and thus represents the only step of substrate-level phosphorylation in the TCA. The beta subunit provides nucleotide specificity of the enzyme and binds the substrate succinate, while the binding sites for coenzyme A and phosphate are found in the alpha subunit. The sequence is that of Succinate--CoA ligase [ADP-forming] subunit beta from Mycobacterium tuberculosis (strain CDC 1551 / Oshkosh).